The chain runs to 267 residues: Translation initiation factor 2 subunit alpha (267 aa).

The 72-residue stretch at 10–81 (GELVVGKVDD…SAQQIDLSLK (72 aa)) folds into the S1 motif domain.

It belongs to the eIF-2-alpha family. Heterotrimer composed of an alpha, a beta and a gamma chain.

Functionally, eIF-2 functions in the early steps of protein synthesis by forming a ternary complex with GTP and initiator tRNA. The sequence is that of Translation initiation factor 2 subunit alpha from Halobacterium salinarum (strain ATCC 29341 / DSM 671 / R1).